The primary structure comprises 201 residues: Ribonuclease HII (201 aa).

In terms of domain architecture, RNase H type-2 spans 15–201 (QRVAGVDEVG…FRPVRRFLEA (187 aa)). A divalent metal cation is bound by residues aspartate 21, glutamate 22, and aspartate 113.

Belongs to the RNase HII family. Mn(2+) serves as cofactor. It depends on Mg(2+) as a cofactor.

It localises to the cytoplasm. The enzyme catalyses Endonucleolytic cleavage to 5'-phosphomonoester.. Its function is as follows. Endonuclease that specifically degrades the RNA of RNA-DNA hybrids. The sequence is that of Ribonuclease HII from Nitrosococcus oceani (strain ATCC 19707 / BCRC 17464 / JCM 30415 / NCIMB 11848 / C-107).